A 362-amino-acid polypeptide reads, in one-letter code: Fe-S cluster assembly protein DRE2 (362 aa).

The segment at 1–28 is disordered; sequence MAPGLDLTPDFHPPTTTTTTTNNAPPQQ. Positions 15–28 are enriched in low complexity; that stretch reads TTTTTTTNNAPPQQ. The N-terminal SAM-like domain stretch occupies residues 24–165; the sequence is APPQQRTLLL…KPEYAEEEAV (142 aa). The interval 166-254 is linker; that stretch reads PLRFGKKKAA…EETLLTEEDL (89 aa). C264, C275, C278, and C280 together coordinate [2Fe-2S] cluster. Positions 264–280 are fe-S binding site A; it reads CQPQPGKKRRACKDCTC. [4Fe-4S] cluster is bound by residues C325, C328, C336, and C339. 2 consecutive short sequence motifs (cx2C motif) follow at residues 325–328 and 336–339; these read CGSC and CSDC. Residues 325 to 339 form a fe-S binding site B region; the sequence is CGSCYLGDAFRCSDC.

The protein belongs to the anamorsin family. As to quaternary structure, monomer. Interacts with TAH18. Interacts with MIA40. [2Fe-2S] cluster is required as a cofactor. Requires [4Fe-4S] cluster as cofactor.

Its subcellular location is the cytoplasm. The protein resides in the mitochondrion intermembrane space. In terms of biological role, component of the cytosolic iron-sulfur (Fe-S) protein assembly (CIA) machinery required for the maturation of extramitochondrial Fe-S proteins. Part of an electron transfer chain functioning in an early step of cytosolic Fe-S biogenesis, facilitating the de novo assembly of a [4Fe-4S] cluster on the scaffold complex CFD1-NBP35. Electrons are transferred to DRE2 from NADPH via the FAD- and FMN-containing protein TAH18. TAH18-DRE2 are also required for the assembly of the diferric tyrosyl radical cofactor of ribonucleotide reductase (RNR), probably by providing electrons for reduction during radical cofactor maturation in the catalytic small subunit RNR2. This is Fe-S cluster assembly protein DRE2 from Chaetomium globosum (strain ATCC 6205 / CBS 148.51 / DSM 1962 / NBRC 6347 / NRRL 1970) (Soil fungus).